We begin with the raw amino-acid sequence, 406 residues long: MVPPPPSRGGAARGQLGRSLGPLLLLLALGHTWTYREEPEDGDREICSESKIATTKYPCLKSSGELTTCYRKKCCKGYKFVLGQCIPEDYDVCAEAPCEQQCTDNFGRVLCTCYPGYRYDRERHRKREKPYCLDIDECASSNGTLCAHICINTLGSYRCECREGYIREDDGKTCTRGDKYPNDTGHEKSENMVKAGTCCATCKEFYQMKQTVLQLKQKIALLPNNAADLGKYITGDKVLASNTYLPGPPGLPGGQGPPGSPGPKGSPGFPGMPGPPGQPGPRGSMGPMGPSPDLSHIKQGRRGPVGPPGAPGRDGSKGERGAPGPRGSPGPPGSFDFLLLMLADIRNDITELQEKVFGHRTHSSAEEFPLPQEFPSYPEAMDLGSGDDHPRRTETRDLRAPRDFYP.

The first 34 residues, 1-34, serve as a signal peptide directing secretion; it reads MVPPPPSRGGAARGQLGRSLGPLLLLLALGHTWT. In terms of domain architecture, EGF-like; calcium-binding spans 134-175; sequence DIDECASSNGTLCAHICINTLGSYRCECREGYIREDDGKTCT. Disulfide bonds link Cys138–Cys150, Cys146–Cys159, and Cys161–Cys174. Asn142 is a glycosylation site (N-linked (GlcNAc...) asparagine). Residue Asn182 is glycosylated (N-linked (GlcNAc...) asparagine). Disordered stretches follow at residues 244 to 335 and 360 to 406; these read YLPG…PGSF and RTHS…DFYP. Collagen-like domains are found at residues 245–290 and 300–333; these read LPGP…PMGP and GRRG…GPPG. Over residues 270–279 the composition is skewed to pro residues; sequence PGMPGPPGQP. Positions 281–292 are enriched in low complexity; that stretch reads PRGSMGPMGPSP. Residue Ser385 is glycosylated (O-linked (Xyl...) (chondroitin sulfate) serine). The span at 386 to 406 shows a compositional bias: basic and acidic residues; the sequence is GDDHPRRTETRDLRAPRDFYP.

This sequence belongs to the CCBE1 family. As to expression, detected in fibroblasts and urine (at protein level). Not expressed in blood or lymphatic endothelial cells.

The protein resides in the secreted. Required for lymphangioblast budding and angiogenic sprouting from venous endothelium during embryogenesis. This is Collagen and calcium-binding EGF domain-containing protein 1 (CCBE1) from Homo sapiens (Human).